Here is a 418-residue protein sequence, read N- to C-terminus: Cyclin-dependent kinase 15 (418 aa).

A Protein kinase domain is found at 84–369; sequence YLNLEKLGEG…AQDALLHPYF (286 aa). ATP-binding positions include 90 to 98 and lysine 113; that span reads LGEGTYATV. Aspartate 205 serves as the catalytic Proton acceptor.

It belongs to the protein kinase superfamily. CMGC Ser/Thr protein kinase family. CDC2/CDKX subfamily. The cofactor is Mg(2+).

It catalyses the reaction L-seryl-[protein] + ATP = O-phospho-L-seryl-[protein] + ADP + H(+). The catalysed reaction is L-threonyl-[protein] + ATP = O-phospho-L-threonyl-[protein] + ADP + H(+). Serine/threonine-protein kinase involved in the control of the eukaryotic cell cycle, whose activity is controlled by an associated cyclin. The protein is Cyclin-dependent kinase 15 (cdk15) of Danio rerio (Zebrafish).